A 358-amino-acid polypeptide reads, in one-letter code: 3-dehydroquinate synthase (358 aa).

NAD(+) contacts are provided by residues 70–75, 104–108, 128–129, K141, K150, and 168–171; these read DGEQFK, GVIGD, TT, and CLHT. Positions 183, 246, and 263 each coordinate Zn(2+).

The protein belongs to the sugar phosphate cyclases superfamily. Dehydroquinate synthase family. The cofactor is Co(2+). Zn(2+) is required as a cofactor. NAD(+) serves as cofactor.

Its subcellular location is the cytoplasm. It carries out the reaction 7-phospho-2-dehydro-3-deoxy-D-arabino-heptonate = 3-dehydroquinate + phosphate. Its pathway is metabolic intermediate biosynthesis; chorismate biosynthesis; chorismate from D-erythrose 4-phosphate and phosphoenolpyruvate: step 2/7. In terms of biological role, catalyzes the conversion of 3-deoxy-D-arabino-heptulosonate 7-phosphate (DAHP) to dehydroquinate (DHQ). This Shewanella baltica (strain OS155 / ATCC BAA-1091) protein is 3-dehydroquinate synthase.